The chain runs to 215 residues: Ribonuclease T (215 aa).

Positions 21–195 (VVIDVETAGF…YDSKKTAELF (175 aa)) constitute an Exonuclease domain. Residues Asp-24, Glu-26, His-182, and Asp-187 each coordinate Mg(2+). Residue His-182 is the Proton donor/acceptor of the active site.

Belongs to the RNase T family. In terms of assembly, homodimer. Requires Mg(2+) as cofactor.

Functionally, trims short 3' overhangs of a variety of RNA species, leaving a one or two nucleotide 3' overhang. Responsible for the end-turnover of tRNA: specifically removes the terminal AMP residue from uncharged tRNA (tRNA-C-C-A). Also appears to be involved in tRNA biosynthesis. The protein is Ribonuclease T of Wigglesworthia glossinidia brevipalpis.